The sequence spans 381 residues: Anhydro-N-acetylmuramic acid kinase (381 aa).

13–20 serves as a coordination point for ATP; that stretch reads GTSLDGID.

This sequence belongs to the anhydro-N-acetylmuramic acid kinase family.

It carries out the reaction 1,6-anhydro-N-acetyl-beta-muramate + ATP + H2O = N-acetyl-D-muramate 6-phosphate + ADP + H(+). Its pathway is amino-sugar metabolism; 1,6-anhydro-N-acetylmuramate degradation. It participates in cell wall biogenesis; peptidoglycan recycling. Its function is as follows. Catalyzes the specific phosphorylation of 1,6-anhydro-N-acetylmuramic acid (anhMurNAc) with the simultaneous cleavage of the 1,6-anhydro ring, generating MurNAc-6-P. Is required for the utilization of anhMurNAc either imported from the medium or derived from its own cell wall murein, and thus plays a role in cell wall recycling. This chain is Anhydro-N-acetylmuramic acid kinase, found in Francisella tularensis subsp. novicida (strain U112).